Reading from the N-terminus, the 153-residue chain is MKTFVLHIFIFALVAFASASRDSAKKIGSQYDNYATCLTEHSLTEDDIFSIGEVSSGQHKTNHEDTELHKNGCVMQCLLEKDGLMSGADYDEEKMREDYIKETGAQPGDQRIEALNACMHETKDMEDKCDKSLLLVACVLAAEAVLADSNEGA.

Positions 1–19 (MKTFVLHIFIFALVAFASA) are cleaved as a signal peptide. Intrachain disulfides connect Cys37–Cys77, Cys73–Cys129, and Cys118–Cys138.

It belongs to the PBP/GOBP family. Homodimer.

It is found in the secreted. In terms of biological role, colony queen number, a major feature of social organization, is associated with worker genotype for Gp-9. Colonies are headed by either a single reproductive queen (monogyne form) or multiple queens (polygyne form). Differences in worker Gp-9 genotypes between social forms may cause differences in workers' abilities to recognize queens and regulate their numbers. This Solenopsis richteri (Black imported fire ant) protein is Pheromone-binding protein Gp-9.